The sequence spans 81 residues: ATP synthase subunit c (81 aa).

2 helical membrane-spanning segments follow: residues 7-27 (AASVLAAALAVGLAAIGPGIG) and 57-77 (LAFMEALTIYGLVVALVLLFA).

The protein belongs to the ATPase C chain family. As to quaternary structure, F-type ATPases have 2 components, F(1) - the catalytic core - and F(0) - the membrane proton channel. F(1) has five subunits: alpha(3), beta(3), gamma(1), delta(1), epsilon(1). F(0) has four main subunits: a(1), b(1), b'(1) and c(10-14). The alpha and beta chains form an alternating ring which encloses part of the gamma chain. F(1) is attached to F(0) by a central stalk formed by the gamma and epsilon chains, while a peripheral stalk is formed by the delta, b and b' chains.

It localises to the cellular thylakoid membrane. F(1)F(0) ATP synthase produces ATP from ADP in the presence of a proton or sodium gradient. F-type ATPases consist of two structural domains, F(1) containing the extramembraneous catalytic core and F(0) containing the membrane proton channel, linked together by a central stalk and a peripheral stalk. During catalysis, ATP synthesis in the catalytic domain of F(1) is coupled via a rotary mechanism of the central stalk subunits to proton translocation. Its function is as follows. Key component of the F(0) channel; it plays a direct role in translocation across the membrane. A homomeric c-ring of between 10-14 subunits forms the central stalk rotor element with the F(1) delta and epsilon subunits. This chain is ATP synthase subunit c, found in Nostoc sp. (strain PCC 7120 / SAG 25.82 / UTEX 2576).